We begin with the raw amino-acid sequence, 389 residues long: Apicidin F cluster transcription factor apf2 (389 aa).

Polar residues-rich tracts occupy residues 1-13 (MSPP…TITD) and 75-84 (PDSATPKPSL). Disordered regions lie at residues 1–27 (MSPP…VAQR), 65–84 (PQSV…KPSL), and 219–239 (EVPN…TKQP). Residues 12–38 (TDANERRKAQNRVAQRNYRSRQKLRVE) form a basic DNA-binding region region. ANK repeat units follow at residues 241–270 (EFKT…NIDT), 274–303 (HGRT…DLLM), 307–336 (SGVT…QQDR), and 357–386 (QNMT…DVNI).

The protein belongs to the bZIP family. Highly divergent.

Its subcellular location is the nucleus. Its function is as follows. Transcription factor that regulates the expression of the gene cluster that mediates the biosynthesis of apicidin F. Binds to the eight-base-pair motif 5'-TGACGTGA-3' called the 'Api-box' that is found in all promoters of the apicidin F cluster except in the promoter region of apf2 itself. This chain is Apicidin F cluster transcription factor apf2, found in Gibberella fujikuroi (strain CBS 195.34 / IMI 58289 / NRRL A-6831) (Bakanae and foot rot disease fungus).